The sequence spans 211 residues: Large ribosomal subunit protein uL4 (211 aa).

Positions 50-77 (STLTKGEVSGGGKKPYKQKHTGKARQGS) are disordered. Over residues 63-72 (KPYKQKHTGK) the composition is skewed to basic residues.

The protein belongs to the universal ribosomal protein uL4 family. Part of the 50S ribosomal subunit.

One of the primary rRNA binding proteins, this protein initially binds near the 5'-end of the 23S rRNA. It is important during the early stages of 50S assembly. It makes multiple contacts with different domains of the 23S rRNA in the assembled 50S subunit and ribosome. Its function is as follows. Forms part of the polypeptide exit tunnel. The polypeptide is Large ribosomal subunit protein uL4 (Mycoplasma genitalium (strain ATCC 33530 / DSM 19775 / NCTC 10195 / G37) (Mycoplasmoides genitalium)).